The primary structure comprises 404 residues: Propionate kinase (404 aa).

Belongs to the acetokinase family. PduW subfamily.

Its subcellular location is the cytoplasm. The enzyme catalyses propanoate + ATP = propanoyl phosphate + ADP. It participates in polyol metabolism; 1,2-propanediol degradation. In terms of biological role, works with phosphate acetyltransferase (pta) to capture exogenous propionate and regenerate propionyl-CoA during degradation of 1,2-propanediol (1,2-PD). The polypeptide is Propionate kinase (Citrobacter koseri (strain ATCC BAA-895 / CDC 4225-83 / SGSC4696)).